The primary structure comprises 159 residues: Small ribosomal subunit protein uS7 (159 aa).

It belongs to the universal ribosomal protein uS7 family. In terms of assembly, part of the 30S ribosomal subunit. Contacts proteins S9 and S11.

One of the primary rRNA binding proteins, it binds directly to 16S rRNA where it nucleates assembly of the head domain of the 30S subunit. Is located at the subunit interface close to the decoding center, probably blocks exit of the E-site tRNA. The sequence is that of Small ribosomal subunit protein uS7 from Wolbachia sp. subsp. Brugia malayi (strain TRS).